The sequence spans 107 residues: Class I hydrophobin 3 (107 aa).

A signal peptide spans 1 to 18; sequence MQFKVLAALVIGATLAAA. Disulfide bonds link cysteine 26–cysteine 86, cysteine 33–cysteine 80, cysteine 34–cysteine 67, and cysteine 87–cysteine 100. Residues asparagine 35 and asparagine 89 are each glycosylated (N-linked (GlcNAc...) asparagine).

It belongs to the fungal hydrophobin family. In terms of assembly, self-assembles to form functional amyloid fibrils called rodlets. Self-assembly into fibrillar rodlets occurs spontaneously at hydrophobic:hydrophilic interfaces and the rodlets further associate laterally to form amphipathic monolayers.

It is found in the secreted. It localises to the cell wall. In terms of biological role, aerial growth, conidiation, and dispersal of filamentous fungi in the environment rely upon a capability of their secreting small amphipathic proteins called hydrophobins (HPBs) with low sequence identity. Class I can self-assemble into an outermost layer of rodlet bundles on aerial cell surfaces, conferring cellular hydrophobicity that supports fungal growth, development and dispersal; whereas Class II form highly ordered films at water-air interfaces through intermolecular interactions but contribute nothing to the rodlet structure. Pnh3 is a class I hydrophobin that might be involved in the attachment of the hydrophilic wall of hyphae to the hydrophobic surface of wood under inorganic phosphate (Pi)-deficient conditions and enable the mycelium to degrade efficiently the components of wood and to acquire nutrients containing Pi. The chain is Class I hydrophobin 3 from Pholiota nameko.